We begin with the raw amino-acid sequence, 178 residues long: Orotate phosphoribosyltransferase (178 aa).

Residues Arg-92, Lys-93, Lys-96, and 118-126 (EDVTTTGGS) each bind 5-phospho-alpha-D-ribose 1-diphosphate. Orotate-binding residues include Thr-122 and Arg-150.

It belongs to the purine/pyrimidine phosphoribosyltransferase family. PyrE subfamily. In terms of assembly, homodimer. Mg(2+) serves as cofactor.

It catalyses the reaction orotidine 5'-phosphate + diphosphate = orotate + 5-phospho-alpha-D-ribose 1-diphosphate. The protein operates within pyrimidine metabolism; UMP biosynthesis via de novo pathway; UMP from orotate: step 1/2. In terms of biological role, catalyzes the transfer of a ribosyl phosphate group from 5-phosphoribose 1-diphosphate to orotate, leading to the formation of orotidine monophosphate (OMP). This chain is Orotate phosphoribosyltransferase, found in Methanosphaera stadtmanae (strain ATCC 43021 / DSM 3091 / JCM 11832 / MCB-3).